The chain runs to 129 residues: Small ribosomal subunit protein uS11 (129 aa).

Belongs to the universal ribosomal protein uS11 family. In terms of assembly, part of the 30S ribosomal subunit. Interacts with proteins S7 and S18. Binds to IF-3.

Functionally, located on the platform of the 30S subunit, it bridges several disparate RNA helices of the 16S rRNA. Forms part of the Shine-Dalgarno cleft in the 70S ribosome. This is Small ribosomal subunit protein uS11 from Mannheimia succiniciproducens (strain KCTC 0769BP / MBEL55E).